Reading from the N-terminus, the 125-residue chain is Secreted RxLR effector protein 55 (125 aa).

A signal peptide spans 1 to 21; it reads MAASRSSITTLLLLIVAVALG. The RxLR motif lies at 35–38; sequence RQLR. Over residues 51-87 the composition is skewed to low complexity; sequence ESATSSSSSSALDHKSSAPGEATNASETEHSAASTAS. The interval 51-96 is disordered; it reads ESATSSSSSSALDHKSSAPGEATNASETEHSAASTASEPKHEGPTM. An N-linked (GlcNAc...) asparagine glycan is attached at Asn-74. A helical transmembrane segment spans residues 99 to 119; sequence FVGPAAAGVLAILLIGAVIAF.

Belongs to the RxLR effector family.

It localises to the secreted. It is found in the host cell membrane. Effector that acts as a broad suppressor of cell death to interrupt plant immunity. Inhibits cell death induced by cell death-inducing proteins, including the PAMP elicitor INF1 from P.infestans. The polypeptide is Secreted RxLR effector protein 55 (Plasmopara viticola (Downy mildew of grapevine)).